The chain runs to 354 residues: Probable cinnamyl alcohol dehydrogenase 5 (354 aa).

Cys-43 is a Zn(2+) binding site. Ser-45 serves as a coordination point for NADP(+). Zn(2+)-binding residues include His-65, Glu-66, Cys-96, Cys-99, Cys-102, Cys-110, and Cys-159. Residues Thr-163, 184–189 (GLGGLG), 207–212 (SSSPGK), Thr-247, Gly-271, and 294–296 (SCI) contribute to the NADP(+) site.

It belongs to the zinc-containing alcohol dehydrogenase family. As to quaternary structure, homodimer. The cofactor is Zn(2+).

It catalyses the reaction (E)-cinnamyl alcohol + NADP(+) = (E)-cinnamaldehyde + NADPH + H(+). The catalysed reaction is (E)-coniferol + NADP(+) = (E)-coniferaldehyde + NADPH + H(+). It carries out the reaction (E)-sinapyl alcohol + NADP(+) = (E)-sinapaldehyde + NADPH + H(+). The enzyme catalyses (E)-4-coumaroyl alcohol + NADP(+) = (E)-4-coumaraldehyde + NADPH + H(+). It catalyses the reaction (E)-caffeyl alcohol + NADP(+) = (E)-caffeyl aldehyde + NADPH + H(+). It participates in aromatic compound metabolism; phenylpropanoid biosynthesis. Functionally, involved in lignin biosynthesis. Catalyzes the final step specific for the production of lignin monomers. Catalyzes the NADPH-dependent reduction of coniferaldehyde, 5-hydroxyconiferaldehyde, sinapaldehyde, 4-coumaraldehyde and caffeyl aldehyde to their respective alcohols. In Oryza sativa subsp. japonica (Rice), this protein is Probable cinnamyl alcohol dehydrogenase 5.